A 1087-amino-acid chain; its full sequence is MKNNLSKFVSIFTAFIMIFGTSLFFPHVSAFADDNNANLVSNGDFESGTIDGWIKQGNPTLAATTEEAIGQYSMKVAGRTQTYEGPAYSFLGKMQKGQSYNVSLKVRLVSGQNSSNPLITVTMFREDDNGKHYDTIVWQKQVSEDSWTTVNGTYTLDYTGTLKTLYMYVESPDPTLEYYIDDVVVTPQNPIQVGEISNNQITIQNDIPDLSSVFKDYFPIGVAVDPSRLNDTDPHAQLTAKHFNMLVAENAMKPESLQPTEGNFTFDNADRIVDYAIAHNMKMRGHTLLWHNQVPDWFFQDPSDPTKPASRDLLLQRLKTHITTVLDHFKTKYGAQNPIIGWDVVNEVLDDNGSLRNSKWLQIIGPDYIEKAFEYAHEADPSMKLFINDYNIENNGVKTQAMYDLVKKLKSEGVPISGIGMQMHININSNIDNIKASIEKLASLGVEIQVTELDMNMNGNVSNEALLKQARLYKQLFDLFKAEKQYITAVVFWGVSDDVTWLSKPNAPLLFDSKLQAKPAYWAIADPSKAIPDIQSAKALEGSPTIGANVDSSWKLVKPLYANTYVEGTVGATATVKSMWDTKNLYLLVQVSDNTPSSNDGIEIFVDKNDNKSTSYETDDEHYTIKSDGTGSSDITKYVTSNADGYIVQLAIPIEDISPTLNDKIGLDVRLNDDKGSGSIDTVTVWNDYTNSQDTNTSYFGDIVLSKPAQVATAIYGTPVIDGKIDDIWNKVDAITTNTWVLGSDGATATAKMMWDDKYLYVLADVTDSNLNKSSVNPYEQDSVEVFVDQNNDKTSYYESDDGQYRVNYDNEQSFGGSTNSNGFKSATSLTQSGYIVEEAIPWTSITLLNGTIIGFDLQVNDADENGKRTGIVTWCDPSGNSWQDTSGFGNLLLTGKPSGVLKKSVTFNDIKDNWAKDVIEVLASRHIVEGMTDTQYEPSKTVTRAEFTAMILKLLNIKEEAYNGEFSDVKNGDWYANAIEAAYKAGIIEGDGKNMRPNDSITREEMTSIAMRAYEMLTSYKEENIGATSFNDDKSISDWAKNVVANAAKLGIINGEPSNVFAPKGIATRAEAAAIIYGLLEKSNNL.

The first 30 residues, 1-30, serve as a signal peptide directing secretion; it reads MKNNLSKFVSIFTAFIMIFGTSLFFPHVSA. Positions 37–188 constitute a CBM-cenC domain; that stretch reads ANLVSNGDFE…YIDDVVVTPQ (152 aa). Residues 204 to 527 enclose the GH10 domain; sequence QNDIPDLSSV…KPAYWAIADP (324 aa). Residue E347 is the Proton donor of the active site. D389 is a catalytic residue. E452 (nucleophile) is an active-site residue. SLH domains lie at 903-966, 967-1025, and 1028-1087; these read KKSV…YNGE, FSDV…KEEN, and ATSF…SNNL.

This sequence belongs to the glycosyl hydrolase 10 (cellulase F) family.

It carries out the reaction Hydrolysis of (1-&gt;4)-beta-D-glucosidic linkages in cellulose and cellotetraose, releasing cellobiose from the non-reducing ends of the chains.. This Acetivibrio thermocellus (Hungateiclostridium thermocellum) protein is Exoglucanase XynX (xynX).